We begin with the raw amino-acid sequence, 447 residues long: Adenylosuccinate synthetase (447 aa).

GTP-binding positions include 12 to 18 (GDEGKGK) and 40 to 42 (GHT). The active-site Proton acceptor is D13. D13 and G40 together coordinate Mg(2+). IMP is bound by residues 13 to 16 (DEGK), 38 to 41 (NAGH), T128, R142, Q223, T238, and R302. The active-site Proton donor is the H41. Position 298-304 (298-304 (TTTGRRR)) interacts with substrate. Residues R304, 330–332 (KLD), and 412–414 (SLG) contribute to the GTP site.

The protein belongs to the adenylosuccinate synthetase family. Homodimer. It depends on Mg(2+) as a cofactor.

The protein localises to the cytoplasm. The enzyme catalyses IMP + L-aspartate + GTP = N(6)-(1,2-dicarboxyethyl)-AMP + GDP + phosphate + 2 H(+). The protein operates within purine metabolism; AMP biosynthesis via de novo pathway; AMP from IMP: step 1/2. Plays an important role in the de novo pathway of purine nucleotide biosynthesis. Catalyzes the first committed step in the biosynthesis of AMP from IMP. The protein is Adenylosuccinate synthetase of Thermosynechococcus vestitus (strain NIES-2133 / IAM M-273 / BP-1).